The following is a 440-amino-acid chain: Serine/threonine-protein kinase VRK1 (440 aa).

The Protein kinase domain maps to 37 to 317 (WKLGLPIGQG…LLEYTEKPLY (281 aa)). ATP contacts are provided by residues 43-51 (IGQGGFGCI) and K71. Residue K71 forms a Glycyl lysine isopeptide (Lys-Gly) (interchain with G-Cter in SUMO2) linkage. The active-site Proton acceptor is the D177. Residue S342 is modified to Phosphoserine; by PLK3. Phosphoserine is present on S376. Phosphothreonine is present on T378. Composition is skewed to polar residues over residues 379 to 391 (QVQE…SVES) and 398 to 410 (SMSQ…SSSD). A disordered region spans residues 379–440 (QVQEAAQTRS…GSRTRKKAQK (62 aa)). The interval 387 to 393 (RSVESQG) is required for interaction with the nucleosome.

Belongs to the protein kinase superfamily. CK1 Ser/Thr protein kinase family. VRK subfamily. Interacts with HDAC1, KAT2B, SETDB1, KDM3A and KDM4A. Associates with the nucleosome through interactions with nucleosome DNA, histone H2A and histone H2B; the interaction with H2A and H2B is mediated by the nucleosome acidic patch, a cluster of negatively charged residues of H2A and H2B forming a cleft within the nucleosome core. In terms of processing, autophosphorylated at various serine and threonine residues. Autophosphorylation does not impair its ability to phosphorylate p53/TP53. Phosphorylation by PLK3 leads to induction of Golgi fragmentation during mitosis. In terms of tissue distribution, highly expressed in testis. Expressed in liver, kidney and muscle. Weakly expressed in thymus, bone marrow and spleen.

It localises to the nucleus. The protein localises to the cytoplasm. Its subcellular location is the cajal body. It catalyses the reaction L-seryl-[protein] + ATP = O-phospho-L-seryl-[protein] + ADP + H(+). The enzyme catalyses L-threonyl-[protein] + ATP = O-phospho-L-threonyl-[protein] + ADP + H(+). With respect to regulation, active in presence of Mn(2+), Mg(2+) and Zn(2+), but is not functional with Ca(2+) or Cu(2+). Has a higher affinity for Mn(2+) than for Mg(2+). RAN inhibits its autophosphorylation and its ability to phosphorylate histone H3. Functionally, serine/threonine kinase involved in the regulation of key cellular processes including the cell cycle, nuclear condensation, transcription regulation, and DNA damage response. Controls chromatin organization and remodeling by mediating phosphorylation of histone H3 on 'Thr-4' and histone H2AX (H2aXT4ph). It also phosphorylates KAT5 in response to DNA damage, promoting KAT5 association with chromatin and histone acetyltransferase activity. Is involved in the regulation of cell cycle progression of neural progenitors, and is required for proper cortical neuronal migration. Is involved in neurite elongation and branching in motor neurons, and has an essential role in Cajal bodies assembly, acting through COIL phosphorylation and the control of coilin degradation. Involved in Golgi disassembly during the cell cycle: following phosphorylation by PLK3 during mitosis, required to induce Golgi fragmentation. Phosphorylates BANF1: disrupts its ability to bind DNA, reduces its binding to LEM domain-containing proteins and causes its relocalization from the nucleus to the cytoplasm. Phosphorylates TP53BP1 and p53/TP53 on 'Thr-18', preventing the interaction between p53/TP53 and MDM2. Phosphorylates ATF2 which activates its transcriptional activity. Phosphorylates JUN. The chain is Serine/threonine-protein kinase VRK1 from Mus musculus (Mouse).